A 220-amino-acid polypeptide reads, in one-letter code: Serine protease-like protein 51 (220 aa).

The signal sequence occupies residues 1–16; it reads MFQLLIPLLLALKGHA. A Peptidase S1 domain is found at 23–220; that stretch reads VQCGHRPAFP…SSKWVSSVGA (198 aa). The N-linked (GlcNAc...) asparagine glycan is linked to Asn-33. A disulfide bridge links Cys-64 with Cys-80. Residue Asn-92 is glycosylated (N-linked (GlcNAc...) asparagine). A disulfide bond links Cys-157 and Cys-170.

Belongs to the peptidase S1 family.

Its subcellular location is the secreted. In Homo sapiens (Human), this protein is Serine protease-like protein 51.